Here is a 39-residue protein sequence, read N- to C-terminus: Photosystem II reaction center protein J (39 aa).

A helical transmembrane segment spans residues 9–29 (LWLVATVGGIAVITVLGIFIY).

The protein belongs to the PsbJ family. In terms of assembly, PSII is composed of 1 copy each of membrane proteins PsbA, PsbB, PsbC, PsbD, PsbE, PsbF, PsbH, PsbI, PsbJ, PsbK, PsbL, PsbM, PsbT, PsbX, PsbY, PsbZ, Psb30/Ycf12, at least 3 peripheral proteins of the oxygen-evolving complex and a large number of cofactors. It forms dimeric complexes.

The protein localises to the plastid. The protein resides in the chloroplast thylakoid membrane. In terms of biological role, one of the components of the core complex of photosystem II (PSII). PSII is a light-driven water:plastoquinone oxidoreductase that uses light energy to abstract electrons from H(2)O, generating O(2) and a proton gradient subsequently used for ATP formation. It consists of a core antenna complex that captures photons, and an electron transfer chain that converts photonic excitation into a charge separation. The chain is Photosystem II reaction center protein J from Gracilaria tenuistipitata var. liui (Red alga).